The primary structure comprises 361 residues: Ribosomal RNA large subunit methyltransferase M (361 aa).

S-adenosyl-L-methionine is bound by residues Ser-186, 219 to 222 (CPGG), Asp-238, Asp-258, and Asp-275. The Proton acceptor role is filled by Lys-304.

Belongs to the class I-like SAM-binding methyltransferase superfamily. RNA methyltransferase RlmE family. RlmM subfamily. Monomer.

It is found in the cytoplasm. It carries out the reaction cytidine(2498) in 23S rRNA + S-adenosyl-L-methionine = 2'-O-methylcytidine(2498) in 23S rRNA + S-adenosyl-L-homocysteine + H(+). In terms of biological role, catalyzes the 2'-O-methylation at nucleotide C2498 in 23S rRNA. In Pseudoalteromonas translucida (strain TAC 125), this protein is Ribosomal RNA large subunit methyltransferase M.